The primary structure comprises 440 residues: Cytochrome c biogenesis protein Ccs1 (440 aa).

3 consecutive transmembrane segments (helical) span residues 25 to 45 (LQFS…GTVI), 84 to 104 (TWWF…CSIS), and 170 to 190 (LAPI…VLGL).

The protein belongs to the Ccs1/CcsB family. May interact with CcsA.

The protein resides in the plastid. Its subcellular location is the chloroplast thylakoid membrane. Required during biogenesis of c-type cytochromes (cytochrome c6 and cytochrome f) at the step of heme attachment. The polypeptide is Cytochrome c biogenesis protein Ccs1 (Pyropia yezoensis (Susabi-nori)).